A 228-amino-acid polypeptide reads, in one-letter code: Lipoprotein-releasing system ATP-binding protein LolD (228 aa).

An ABC transporter domain is found at 5–228 (LRCHQVCKTY…DGLLTDITGA (224 aa)). ATP is bound at residue 41–48 (GSSGSGKS).

It belongs to the ABC transporter superfamily. Lipoprotein translocase (TC 3.A.1.125) family. As to quaternary structure, the complex is composed of two ATP-binding proteins (LolD) and two transmembrane proteins (LolC and LolE).

It is found in the cell inner membrane. Its function is as follows. Part of the ABC transporter complex LolCDE involved in the translocation of mature outer membrane-directed lipoproteins, from the inner membrane to the periplasmic chaperone, LolA. Responsible for the formation of the LolA-lipoprotein complex in an ATP-dependent manner. This Vibrio cholerae serotype O1 (strain ATCC 39315 / El Tor Inaba N16961) protein is Lipoprotein-releasing system ATP-binding protein LolD.